A 222-amino-acid chain; its full sequence is MRNHDCPTVRFFKARVYKEKETQMTQTKKAKVRNLIIAAMLTALGILIPMMMPVKLIIGPASFTLAAHVPVMAAMFFSPLMTAFVALGTTLGFMISIPVPTIWLRALMHLPVMTVGAYVLKKYPEFVHQKVKIQIFNFILGIFHAGLETLVVYAFYSLGFANIEQGALLNFLLLIALGGLVHSMIDFNLALGLGNVLSKAFPIDIFDKAKNLVNKKKVKAEI.

Helical transmembrane passes span 34 to 54 (NLIIAAMLTALGILIPMMMPV), 72 to 94 (MAAMFFSPLMTAFVALGTTLGFM), 101 to 120 (TIWLRALMHLPVMTVGAYVL), 135 to 155 (IFNFILGIFHAGLETLVVYAF), and 167 to 187 (ALLNFLLLIALGGLVHSMIDF).

It belongs to the vitamin uptake transporter (VUT/ECF) (TC 2.A.88) family. In L.lactis forms a stable complex with EcfA, EcfA' and EcfT. In E.coli forms a stable energy-coupling factor (ECF) transporter complex composed of 2 membrane-embedded substrate-binding proteins (S component), 2 ATP-binding proteins (A and A' components) and 2 transmembrane proteins (T component), probably with a stoichiometry of 2:1:1:2. May be able to interact with more than 1 S component at a time.

The protein resides in the cell membrane. In terms of biological role, probably a niacin-binding protein that interacts with the energy-coupling factor (ECF) ABC-transporter complex. Unlike classic ABC transporters this ECF transporter provides the energy necessary to transport a number of different substrates. The substrates themselves are bound by transmembrane, not extracytoplasmic soluble proteins. Uptake of niacin into proteosomes containing EcfA1A2T and Niax has been demonstrated. Uptake requires hydrolyzable Mg-ATP and is substrate-specific; NiaX-containing proteosomes did not transport riboflavin. This is Niacin transporter NiaX (niaX) from Lactococcus lactis subsp. cremoris (strain MG1363).